The following is an 86-amino-acid chain: Neurotoxin 3FTx-RK (86 aa).

Positions 1 to 21 (MKTLLLTLVVVTIVCLELGYT) are cleaved as a signal peptide. 4 disulfide bridges follow: Cys24–Cys45, Cys38–Cys63, Cys67–Cys78, and Cys79–Cys84.

As to expression, expressed by the venom gland.

It is found in the secreted. The chain is Neurotoxin 3FTx-RK from Bungarus fasciatus (Banded krait).